The following is a 505-amino-acid chain: Glutamate--tRNA ligase (505 aa).

The 'HIGH' region motif lies at 12–22 (PSPTGALHIGG). The short motif at 260 to 264 (KLSKR) is the 'KMSKS' region element. K263 contacts ATP.

It belongs to the class-I aminoacyl-tRNA synthetase family. Glutamate--tRNA ligase type 1 subfamily. In terms of assembly, monomer.

The protein resides in the cytoplasm. The catalysed reaction is tRNA(Glu) + L-glutamate + ATP = L-glutamyl-tRNA(Glu) + AMP + diphosphate. Functionally, catalyzes the attachment of glutamate to tRNA(Glu) in a two-step reaction: glutamate is first activated by ATP to form Glu-AMP and then transferred to the acceptor end of tRNA(Glu). This Phocaeicola vulgatus (strain ATCC 8482 / DSM 1447 / JCM 5826 / CCUG 4940 / NBRC 14291 / NCTC 11154) (Bacteroides vulgatus) protein is Glutamate--tRNA ligase.